The primary structure comprises 430 residues: Toxin coregulated pilus biosynthesis protein B (430 aa).

A compositionally biased stretch (polar residues) spans 351–366 (NFSSESAKDSQGTTQK). A disordered region spans residues 351–371 (NFSSESAKDSQGTTQKDGSKG).

Functionally, involved in TCP pilus biogenesis. The chain is Toxin coregulated pilus biosynthesis protein B (tcpB) from Vibrio cholerae serotype O1 (strain ATCC 39315 / El Tor Inaba N16961).